We begin with the raw amino-acid sequence, 505 residues long: Histidine ammonia-lyase (505 aa).

Positions 144–146 (ASG) form a cross-link, 5-imidazolinone (Ala-Gly). S145 is modified (2,3-didehydroalanine (Ser)).

This sequence belongs to the PAL/histidase family. Contains an active site 4-methylidene-imidazol-5-one (MIO), which is formed autocatalytically by cyclization and dehydration of residues Ala-Ser-Gly.

It is found in the cytoplasm. It catalyses the reaction L-histidine = trans-urocanate + NH4(+). It functions in the pathway amino-acid degradation; L-histidine degradation into L-glutamate; N-formimidoyl-L-glutamate from L-histidine: step 1/3. The sequence is that of Histidine ammonia-lyase from Legionella pneumophila (strain Corby).